Here is a 367-residue protein sequence, read N- to C-terminus: Outer membrane protein P2 (367 aa).

Residues 1 to 20 form the signal peptide; the sequence is MKKTLAALIVGAFAASAANA.

It belongs to the Gram-negative porin family. As to quaternary structure, homotrimer.

It localises to the cell outer membrane. Its function is as follows. Forms pores that allow passive diffusion of small molecules across the outer membrane. This chain is Outer membrane protein P2 (ompP2), found in Haemophilus influenzae.